A 1019-amino-acid polypeptide reads, in one-letter code: Collagen alpha-2(VI) chain (1019 aa).

A signal peptide spans methionine 1 to alanine 20. The nonhelical region stretch occupies residues glutamine 21–glycine 256. Residues histidine 46–isoleucine 234 enclose the VWFA 1 domain. N-linked (GlcNAc...) asparagine glycosylation occurs at asparagine 140. The tract at residues proline 257 to glycine 588 is disordered. Residues proline 257 to threonine 590 form a triple-helical region region. Positions aspartate 287–phenylalanine 305 are enriched in low complexity. Positions lysine 306 to lysine 318 are enriched in basic and acidic residues. Asparagine 327 carries an N-linked (GlcNAc...) asparagine glycan. Basic and acidic residues-rich tracts occupy residues glutamate 365 to arginine 377 and proline 419 to proline 429. Short sequence motifs (cell attachment site) lie at residues arginine 366–aspartate 368, arginine 426–aspartate 428, arginine 489–aspartate 491, arginine 498–aspartate 500, and arginine 539–aspartate 541. Basic and acidic residues predominate over residues proline 524 to proline 557. Residues aspartate 559–arginine 569 are compositionally biased toward pro residues. The interval glutamate 591–cysteine 1019 is nonhelical region. 2 VWFA domains span residues aspartate 615–leucine 805 and aspartate 833–phenylalanine 1014. The N-linked (GlcNAc...) asparagine glycan is linked to asparagine 630. Threonine 701 carries the post-translational modification Phosphothreonine. Serine 705 is subject to Phosphoserine. Asparagine 785, asparagine 897, and asparagine 954 each carry an N-linked (GlcNAc...) asparagine glycan.

It belongs to the type VI collagen family. As to quaternary structure, trimers composed of three different chains: alpha-1(VI), alpha-2(VI), and alpha-3(VI) or alpha-5(VI) or alpha-6(VI). Interacts with CSPG4. In terms of processing, prolines at the third position of the tripeptide repeating unit (G-X-Y) are hydroxylated in some or all of the chains.

The protein resides in the secreted. It is found in the extracellular space. It localises to the extracellular matrix. Its subcellular location is the membrane. In terms of biological role, collagen VI acts as a cell-binding protein. In Homo sapiens (Human), this protein is Collagen alpha-2(VI) chain (COL6A2).